Reading from the N-terminus, the 164-residue chain is 2-C-methyl-D-erythritol 2,4-cyclodiphosphate synthase (164 aa).

Residues D9 and H11 each coordinate a divalent metal cation. 4-CDP-2-C-methyl-D-erythritol 2-phosphate-binding positions include 9-11 (DAH) and 36-37 (HS). H44 contributes to the a divalent metal cation binding site. 4-CDP-2-C-methyl-D-erythritol 2-phosphate is bound by residues 58 to 60 (DLG), 63 to 67 (FPDSD), 134 to 137 (TTTE), F141, and R144.

The protein belongs to the IspF family. Homotrimer. It depends on a divalent metal cation as a cofactor.

The enzyme catalyses 4-CDP-2-C-methyl-D-erythritol 2-phosphate = 2-C-methyl-D-erythritol 2,4-cyclic diphosphate + CMP. It participates in isoprenoid biosynthesis; isopentenyl diphosphate biosynthesis via DXP pathway; isopentenyl diphosphate from 1-deoxy-D-xylulose 5-phosphate: step 4/6. Involved in the biosynthesis of isopentenyl diphosphate (IPP) and dimethylallyl diphosphate (DMAPP), two major building blocks of isoprenoid compounds. Catalyzes the conversion of 4-diphosphocytidyl-2-C-methyl-D-erythritol 2-phosphate (CDP-ME2P) to 2-C-methyl-D-erythritol 2,4-cyclodiphosphate (ME-CPP) with a corresponding release of cytidine 5-monophosphate (CMP). This is 2-C-methyl-D-erythritol 2,4-cyclodiphosphate synthase from Alkalilimnicola ehrlichii (strain ATCC BAA-1101 / DSM 17681 / MLHE-1).